Reading from the N-terminus, the 190-residue chain is Elongation factor P (190 aa).

The protein belongs to the elongation factor P family.

Its subcellular location is the cytoplasm. It participates in protein biosynthesis; polypeptide chain elongation. Functionally, involved in peptide bond synthesis. Stimulates efficient translation and peptide-bond synthesis on native or reconstituted 70S ribosomes in vitro. Probably functions indirectly by altering the affinity of the ribosome for aminoacyl-tRNA, thus increasing their reactivity as acceptors for peptidyl transferase. This Persephonella marina (strain DSM 14350 / EX-H1) protein is Elongation factor P.